A 197-amino-acid polypeptide reads, in one-letter code: Holliday junction branch migration complex subunit RuvA (197 aa).

The tract at residues 1–63 is domain I; sequence MYAYLKGIIT…EDAHLLYGFR (63 aa). The domain II stretch occupies residues 64 to 142; sequence SEDEKKLFLS…VAGDDLPAKI (79 aa). The tract at residues 143-147 is flexible linker; it reads AVQAS. A domain III region spans residues 148-197; the sequence is AENQELEEAMEAMLALGYKATELKKIKKFFEGTTDTAENYIKSALKMLVK.

Belongs to the RuvA family. Homotetramer. Forms an RuvA(8)-RuvB(12)-Holliday junction (HJ) complex. HJ DNA is sandwiched between 2 RuvA tetramers; dsDNA enters through RuvA and exits via RuvB. An RuvB hexamer assembles on each DNA strand where it exits the tetramer. Each RuvB hexamer is contacted by two RuvA subunits (via domain III) on 2 adjacent RuvB subunits; this complex drives branch migration. In the full resolvosome a probable DNA-RuvA(4)-RuvB(12)-RuvC(2) complex forms which resolves the HJ.

It localises to the cytoplasm. The RuvA-RuvB-RuvC complex processes Holliday junction (HJ) DNA during genetic recombination and DNA repair, while the RuvA-RuvB complex plays an important role in the rescue of blocked DNA replication forks via replication fork reversal (RFR). RuvA specifically binds to HJ cruciform DNA, conferring on it an open structure. The RuvB hexamer acts as an ATP-dependent pump, pulling dsDNA into and through the RuvAB complex. HJ branch migration allows RuvC to scan DNA until it finds its consensus sequence, where it cleaves and resolves the cruciform DNA. In Streptococcus pneumoniae (strain Taiwan19F-14), this protein is Holliday junction branch migration complex subunit RuvA.